A 185-amino-acid polypeptide reads, in one-letter code: Ribosome-recycling factor (185 aa).

This sequence belongs to the RRF family.

The protein localises to the cytoplasm. Its function is as follows. Responsible for the release of ribosomes from messenger RNA at the termination of protein biosynthesis. May increase the efficiency of translation by recycling ribosomes from one round of translation to another. The sequence is that of Ribosome-recycling factor from Dichelobacter nodosus (strain VCS1703A).